Here is a 162-residue protein sequence, read N- to C-terminus: N5-carboxyaminoimidazole ribonucleotide mutase (162 aa).

Residues serine 11, aspartate 14, and arginine 41 each coordinate substrate.

This sequence belongs to the AIR carboxylase family. Class I subfamily.

The enzyme catalyses 5-carboxyamino-1-(5-phospho-D-ribosyl)imidazole + H(+) = 5-amino-1-(5-phospho-D-ribosyl)imidazole-4-carboxylate. It participates in purine metabolism; IMP biosynthesis via de novo pathway; 5-amino-1-(5-phospho-D-ribosyl)imidazole-4-carboxylate from 5-amino-1-(5-phospho-D-ribosyl)imidazole (N5-CAIR route): step 2/2. In terms of biological role, catalyzes the conversion of N5-carboxyaminoimidazole ribonucleotide (N5-CAIR) to 4-carboxy-5-aminoimidazole ribonucleotide (CAIR). The sequence is that of N5-carboxyaminoimidazole ribonucleotide mutase from Brucella melitensis biotype 1 (strain ATCC 23456 / CCUG 17765 / NCTC 10094 / 16M).